We begin with the raw amino-acid sequence, 792 residues long: Terminal nucleotidyltransferase 4A (792 aa).

The disordered stretch occupies residues 55–191 (GAAGRGSGGL…QFHPGRRKRE (137 aa)). 2 stretches are compositionally biased toward low complexity: residues 80–97 (APAA…PAAE) and 105–139 (SPSL…ASLG). Mg(2+) contacts are provided by aspartate 297 and aspartate 299. Residues glycine 360, lysine 385, serine 403, and tyrosine 404 each contribute to the ATP site. One can recognise a PAP-associated domain in the interval 428-486 (NLGMLLVEFFELYGRNFNYLKTGIRIKEGGAYIAKEEIMKAMTSGYRPSMLCIEDPLLP). Residues asparagine 488 and arginine 492 each coordinate ATP. Residues 601–619 (QLLSSGSSASSVSSLSGSD) are compositionally biased toward low complexity. 2 disordered regions span residues 601-632 (QLLS…TPSV) and 737-792 (MKGS…SLSR). Gly residues predominate over residues 744–756 (TQGGGYSSVGSGG). The segment covering 764–781 (RGHHQYNRTGWRRKKHTH) has biased composition (basic residues).

This sequence belongs to the DNA polymerase type-B-like family. In terms of assembly, component of a nuclear TRAMP-like complex, an ATP-dependent exosome regulatory complex consisting of a helicase (MTREX), an oligadenylate polymerase (TENT4B or TENT4A), and a substrate specific RNA-binding factor (ZCCHC7 or ZCCHC8). Several TRAMP-like complexes exist with specific compositions and are associated with nuclear, or nucleolar RNA exosomes. Requires Mg(2+) as cofactor. It depends on Mn(2+) as a cofactor.

The protein resides in the cytoplasm. Its subcellular location is the nucleus. It is found in the nucleoplasm. The catalysed reaction is RNA(n) + ATP = RNA(n)-3'-adenine ribonucleotide + diphosphate. Its function is as follows. Terminal nucleotidyltransferase that catalyzes preferentially the transfer of ATP and GTP on RNA 3' poly(A) tail creating a heterogeneous 3' poly(A) tail leading to mRNAs stabilization by protecting mRNAs from active deadenylation. Also functions as a catalytic subunit of a TRAMP-like complex which has a poly(A) RNA polymerase activity and is involved in a post-transcriptional quality control mechanism. Polyadenylation with short oligo(A) tails is required for the degradative activity of the exosome on several of its nuclear RNA substrates. Has no terminal uridylyltransferase activity, and does not play a role in replication-dependent histone mRNA degradation via uridylation. The protein is Terminal nucleotidyltransferase 4A of Homo sapiens (Human).